An 801-amino-acid chain; its full sequence is Cadherin-20 (801 aa).

The N-terminal stretch at 1–34 is a signal peptide; sequence MWTTGRMSNAKSWLGLGTSLYFWALMDLTATVLS. The propeptide occupies 35-59; it reads STPMPEVELETLFSGRSQSHQRSKR. Topologically, residues 60–619 are extracellular; sequence SWVWNQFFVL…AYLLPVSLSR (560 aa). Cadherin domains lie at 61-165, 166-274, 275-389, 390-494, and 494-610; these read WVWN…EPKF, LDGP…PPRF, PQKH…PPVF, EPGF…APEF, and FPRF…SPEA. An N-linked (GlcNAc...) asparagine glycan is attached at N261. N420, N461, and N542 each carry an N-linked (GlcNAc...) asparagine glycan. The helical transmembrane segment at 620–640 threads the bilayer; that stretch reads GALIAILACIFVLLVLVLLIL. Over 641-801 the chain is Cytoplasmic; it reads SMRRHRKQPY…GASEGPAPLW (161 aa).

In terms of tissue distribution, expressed in brain. Highest level of expression in the retina. In embryo it is synthesized by the forebrain, anterior neural ridge, developing visual system, primitive external granular layer of the cerebellum and a subset of neural crest cells likely to develop into melanoblasts.

Its subcellular location is the cell membrane. Cadherins are calcium-dependent cell adhesion proteins. They preferentially interact with themselves in a homophilic manner in connecting cells; cadherins may thus contribute to the sorting of heterogeneous cell types. The polypeptide is Cadherin-20 (Cdh20) (Mus musculus (Mouse)).